The sequence spans 416 residues: D-amino acid dehydrogenase (416 aa).

Residue 3–17 participates in FAD binding; it reads VVILGAGVIGVTSAW.

It belongs to the DadA oxidoreductase family. FAD serves as cofactor.

The catalysed reaction is a D-alpha-amino acid + A + H2O = a 2-oxocarboxylate + AH2 + NH4(+). It participates in amino-acid degradation; D-alanine degradation; NH(3) and pyruvate from D-alanine: step 1/1. Its function is as follows. Oxidative deamination of D-amino acids. The protein is D-amino acid dehydrogenase of Rhizorhabdus wittichii (strain DSM 6014 / CCUG 31198 / JCM 15750 / NBRC 105917 / EY 4224 / RW1) (Sphingomonas wittichii).